A 338-amino-acid chain; its full sequence is RNA 3'-terminal phosphate cyclase (338 aa).

ATP is bound by residues Q103 and 283 to 287 (YLADQ). Residue H308 is the Tele-AMP-histidine intermediate of the active site.

The protein belongs to the RNA 3'-terminal cyclase family. Type 1 subfamily.

The protein localises to the cytoplasm. The enzyme catalyses a 3'-end 3'-phospho-ribonucleotide-RNA + ATP = a 3'-end 2',3'-cyclophospho-ribonucleotide-RNA + AMP + diphosphate. Functionally, catalyzes the conversion of 3'-phosphate to a 2',3'-cyclic phosphodiester at the end of RNA. The mechanism of action of the enzyme occurs in 3 steps: (A) adenylation of the enzyme by ATP; (B) transfer of adenylate to an RNA-N3'P to produce RNA-N3'PP5'A; (C) and attack of the adjacent 2'-hydroxyl on the 3'-phosphorus in the diester linkage to produce the cyclic end product. The biological role of this enzyme is unknown but it is likely to function in some aspects of cellular RNA processing. In Escherichia coli O81 (strain ED1a), this protein is RNA 3'-terminal phosphate cyclase.